Consider the following 583-residue polypeptide: Sphingomyelin phosphodiesterase A (583 aa).

The N-terminal stretch at 1 to 21 (MKSIPIILLVLIGLLLASVYS) is a signal peptide. A Saposin B-type domain is found at 51 to 133 (IQLSCDVCQI…GYFKICSATG (83 aa)). Intrachain disulfides connect Cys55–Cys129, Cys58–Cys123, and Cys86–Cys97. The N-linked (GlcNAc...) asparagine glycan is linked to Asn72. N-linked (GlcNAc...) asparagine glycosylation is present at Asn182. Zn(2+) contacts are provided by Asp193 and His195. Cysteines 214 and 229 form a disulfide. Zn(2+)-binding residues include Asp258 and Asn298. N-linked (GlcNAc...) asparagine glycosylation is present at Asn377. The Zn(2+) site is built by His401, His436, and His438. Asn495, Asn500, Asn537, and Asn547 each carry an N-linked (GlcNAc...) asparagine glycan. Residues Cys567 and Cys580 are joined by a disulfide bond.

Belongs to the acid sphingomyelinase family. The cofactor is Zn(2+).

The protein resides in the secreted. Converts sphingomyelin to ceramide. This chain is Sphingomyelin phosphodiesterase A (sgmA), found in Dictyostelium discoideum (Social amoeba).